The chain runs to 441 residues: Putative F-box/FBD/LRR-repeat protein At4g00315 (441 aa).

An F-box domain is found at Met1–Asp47. LRR repeat units lie at residues Gln57–Leu82, Ile87–Leu115, Ile137–Arg164, Val165–Arg190, Leu211–Asp236, Ser243–Leu271, Leu293–Ser318, and Cys319–Val344. The FBD domain occupies Gln358–Phe410.

The chain is Putative F-box/FBD/LRR-repeat protein At4g00315 from Arabidopsis thaliana (Mouse-ear cress).